The following is a 166-amino-acid chain: Outer membrane protein assembly factor BamE (166 aa).

An N-terminal signal peptide occupies residues 1-18 (MKRTVFPLAVAAALTLTA). Residue Cys19 is the site of N-palmitoyl cysteine attachment. A lipid anchor (S-diacylglycerol cysteine) is attached at Cys19. The disordered stretch occupies residues 143 to 166 (LFSNDDSGEMPVKPESKPSDLLNE).

Belongs to the BamE family. Part of the Bam complex.

Its subcellular location is the cell outer membrane. In terms of biological role, part of the outer membrane protein assembly complex, which is involved in assembly and insertion of beta-barrel proteins into the outer membrane. The sequence is that of Outer membrane protein assembly factor BamE from Methylomonas methanica (strain DSM 25384 / MC09).